Here is an 803-residue protein sequence, read N- to C-terminus: Nuclear factor of activated T-cells, cytoplasmic 1 (803 aa).

Residues 101 to 106 form a calcineurin-binding region; it reads PRIEIT. The transactivation domain A (TAD-A) stretch occupies residues 109 to 199; sequence LGLHHNSSQF…CVSPKTTDPE (91 aa). Positions 181–195 are enriched in polar residues; it reads PQTSPWQSPCVSPKT. The disordered stretch occupies residues 181–279; the sequence is PQTSPWQSPC…GSPRVSVTDD (99 aa). Tandem repeats lie at residues 184 to 200 and 214 to 230. The segment at 184-279 is 3 X SP repeats; that stretch reads SPWQSPCVSP…GSPRVSVTDD (96 aa). Serine 214 and serine 218 each carry phosphoserine. Residues 214–231 are compositionally biased toward low complexity; sequence SPRHSPSTSPRTSVTEES. At serine 226 the chain carries Phosphoserine; by PKA. The Nuclear localization signal signature appears at 246–248; the sequence is KRK. The stretch at 263–279 is repeat 3; it reads SPTPSPQGSPRVSVTDD. Position 275 is a phosphoserine; by PKA (serine 275). Positions 291–302 match the Nuclear export signal motif; that stretch reads SAIVAAINALST. The 183-residue stretch at 389-571 folds into the RHD domain; that stretch reads PSLPALDWQL…NPIECSQRSA (183 aa). The DNA-binding element occupies 418 to 425; sequence RAHYETEG. A Nuclear localization signal motif is present at residues 661 to 663; the sequence is KRK. The interval 723–803 is disordered; it reads LMPGFPPRPQ…QPQVSPTSSG (81 aa). A compositionally biased stretch (pro residues) spans 778–792; sequence SGVPPGPPQPPPPTL. Over residues 793–803 the composition is skewed to low complexity; it reads LQPQVSPTSSG.

As to quaternary structure, member of the multicomponent NFATC transcription complex that consists of at least two components, a pre-existing cytoplasmic component NFATC2 and an inducible nuclear component NFATC1. Other members such as NFATC4, NFATC3 or members of the activating protein-1 family, MAF, GATA4 and Cbp/p300 can also bind the complex. NFATC proteins bind to DNA as monomers. Interacts with HOMER2 and HOMER3; this interaction may compete with calcineurin/PPP3CA-binding and hence prevent NFATC1 dephosphorylation and activation. Interacts with TLE6/GRG6. Phosphorylated by NFATC-kinase and GSK3B; phosphorylation induces NFATC1 nuclear exit and dephosphorylation by calcineurin promotes nuclear import. Phosphorylation by PKA and DYRK2 negatively modulates nuclear accumulation, and promotes subsequent phosphorylation by GSK3B or casein kinase 1.

It is found in the cytoplasm. Its subcellular location is the nucleus. Plays a role in the inducible expression of cytokine genes in T-cells, especially in the induction of the IL-2 or IL-4 gene transcription. Also controls gene expression in embryonic cardiac cells. Could regulate not only the activation and proliferation but also the differentiation and programmed death of T-lymphocytes as well as lymphoid and non-lymphoid cells. Required for osteoclastogenesis and regulates many genes important for osteoclast differentiation and function. In Bos taurus (Bovine), this protein is Nuclear factor of activated T-cells, cytoplasmic 1.